The sequence spans 1244 residues: SWI/SNF chromatin remodeling complex subunit swsn-7 (1244 aa).

Residues 24-116 (QRKMAEFYNS…YLSKFEQVET (93 aa)) enclose the ARID domain. Residues 486–496 (FTQGSNQQQNP) are compositionally biased toward polar residues. Disordered stretches follow at residues 486 to 534 (FTQG…GAAP), 556 to 583 (NREQ…ILAH), and 597 to 619 (DRRT…ESQL). The segment covering 497 to 508 (HHSQGGHQLGHS) has biased composition (low complexity). A compositionally biased stretch (polar residues) spans 556–566 (NREQYSTQSSQ). Over residues 567–578 (PHPPHTNVPPSP) the composition is skewed to pro residues. Positions 610 to 619 (PSTNSGESQL) are enriched in polar residues. The RFX-type winged-helix DNA-binding region spans 623–697 (TEKWIRQNCV…IVAQGIRLIR (75 aa)). The disordered stretch occupies residues 1134–1244 (EEEQQKMLSE…TTPVRAGAGI (111 aa)). The span at 1142 to 1158 (SEVPSSASLSSMAGSSS) shows a compositional bias: low complexity. Composition is skewed to polar residues over residues 1159–1186 (QLPT…SNKP) and 1194–1212 (LNFS…FTAG). The span at 1220-1231 (PIQQHIPSQPSP) shows a compositional bias: low complexity.

In terms of assembly, component of the SWI/SNF-B (PBAF) chromatin remodeling complex.

It localises to the nucleus. Functionally, involved in transcriptional activation and repression of select genes by chromatin remodeling (alteration of DNA-nucleosome topology). Required for the stability of the SWI/SNF chromatin remodeling complex SWI/SNF-B (PBAF). Required for regulation of a stress response gene network, probably as part of the PBAF complex and perhaps acting in concert with histone demethylase jmjc-1. Binds to the ethanol and stress response elements (ESRE) in the promoter regions of hsp-16.1 and hsp-16.2, probably as part of the PBAF complex. In Caenorhabditis elegans, this protein is SWI/SNF chromatin remodeling complex subunit swsn-7.